A 500-amino-acid chain; its full sequence is Putative (R)-citramalate synthase CimA (500 aa).

The region spanning 9–258 (LRFFDTTLRD…DTRIRTERLY (250 aa)) is the Pyruvate carboxyltransferase domain.

Belongs to the alpha-IPM synthase/homocitrate synthase family. As to quaternary structure, homodimer.

The enzyme catalyses pyruvate + acetyl-CoA + H2O = (3R)-citramalate + CoA + H(+). It participates in amino-acid biosynthesis; L-isoleucine biosynthesis; 2-oxobutanoate from pyruvate: step 1/3. Catalyzes the condensation of pyruvate and acetyl-coenzyme A to form (R)-citramalate. This chain is Putative (R)-citramalate synthase CimA, found in Methanosphaerula palustris (strain ATCC BAA-1556 / DSM 19958 / E1-9c).